A 378-amino-acid chain; its full sequence is B3 domain-containing protein Os03g0622200 (378 aa).

A DNA-binding region (TF-B3 1) is located at residues 29–124 (SKHFLKHMVG…SFDVLIFDPS (96 aa)). Residues 140-159 (GRAENSAGAEQGGRNGRRTP) are disordered. Positions 256-370 (FVQVIHSSHV…TMTVHVLRRV (115 aa)) form a DNA-binding region, TF-B3 2.

It localises to the nucleus. The chain is B3 domain-containing protein Os03g0622200 from Oryza sativa subsp. japonica (Rice).